The primary structure comprises 1630 residues: Histone transcription regulator 3 homolog (1630 aa).

A TPR 1 repeat occupies 8 to 42 (NAASEDLDKEKRTLEIRIEEAVQIYQNALSAQKQG). Residues 325–347 (KDIVPPPSDNLPKPQLLKRPIDD) form a disordered region. The stretch at 1230–1263 (WRALYMLGKACRKCGDMENALVHFEAAAALAPTK) is one TPR 2 repeat.

The protein belongs to the HIR3 family. In terms of assembly, interacts with hip1 and slm9.

The protein resides in the nucleus. In terms of biological role, has a role in a nucleosome assembly pathway that is required for the integrity of heterochromatin and proper chromosome segregation. Required for transcriptional silencing in the outer repeat (otr) region of centromeric repeats and the Tf2 long terminal repeat retrotransposons. The sequence is that of Histone transcription regulator 3 homolog (hip3) from Schizosaccharomyces pombe (strain 972 / ATCC 24843) (Fission yeast).